Here is a 728-residue protein sequence, read N- to C-terminus: Prolyl 3-hydroxylase 1 (728 aa).

Positions 1–14 are cleaved as a signal peptide; that stretch reads MVAVAAAAASRATA. 4 TPR repeats span residues 25-58, 135-168, 197-230, and 293-326; these read PDLLYAEGTAAYARGDWPGVVLNMERALRSRAAL, RSPYNYLQVAYFKINKLEKAVAAAHTFFVGNPEH, HMHEFRLGVRLYSEEKPLEAVPHLEAALQEYFVA, and PSHYNYLQFAYYNIGNYTQAIECAKTYLLFFPND. An N-linked (GlcNAc...) asparagine glycan is attached at asparagine 308. The stretch at 393 to 431 forms a coiled coil; the sequence is KRLQEKQKSERETAVRISQEIGNLMKEIETLVEEKTKES. Asparagine 450, asparagine 459, and asparagine 532 each carry an N-linked (GlcNAc...) asparagine glycan. Residues 556 to 670 form the Fe2OG dioxygenase domain; it reads SHLVCRTAIE…RCAIALWFTL (115 aa). Residues histidine 579, aspartate 581, and histidine 651 each coordinate Fe cation. Residue arginine 661 is part of the active site. Residues 691–728 form a disordered region; that stretch reads SPEEVDLPQEQPLPDQQGSPKPGEESLSDRESQPKDEL. Over residues 698-707 the composition is skewed to low complexity; the sequence is PQEQPLPDQQ. Positions 712–728 are enriched in basic and acidic residues; sequence PGEESLSDRESQPKDEL. Positions 725-728 match the Prevents secretion from ER motif; sequence KDEL.

Belongs to the leprecan family. The cofactor is Fe cation. L-ascorbate is required as a cofactor. In terms of processing, O-glycosylated; chondroitin sulfate. Expressed in basement membranes of cardiac muscle, skeletal muscle, central nervous system, intestinal tract, trachea, ear, skin, liver and kidney. In kidney, localizes to the glomerular basement membrane, mesangial matrix and Bowman's capsule of the nephron. In the renal parenchyma, expressed in the basement membranes of tubules and blood vessels. In the ear and trachea, localizes to the perimeter of resident chondrocytes in lacunae.

Its subcellular location is the endoplasmic reticulum. The protein localises to the secreted. The protein resides in the extracellular space. It is found in the extracellular matrix. The enzyme catalyses L-prolyl-[collagen] + 2-oxoglutarate + O2 = trans-3-hydroxy-L-prolyl-[collagen] + succinate + CO2. Basement membrane-associated chondroitin sulfate proteoglycan (CSPG). Has prolyl 3-hydroxylase activity catalyzing the post-translational formation of 3-hydroxyproline in -Xaa-Pro-Gly- sequences in collagens, especially types IV and V. May be involved in the secretory pathway of cells. Has growth suppressive activity in fibroblasts. The polypeptide is Prolyl 3-hydroxylase 1 (Rattus norvegicus (Rat)).